Consider the following 749-residue polypeptide: Probable galactinol--sucrose galactosyltransferase 6 (749 aa).

Belongs to the glycosyl hydrolases 36 family.

The catalysed reaction is alpha-D-galactosyl-(1-&gt;3)-1D-myo-inositol + sucrose = raffinose + myo-inositol. Transglycosidase operating by a ping-pong reaction mechanism. Involved in the synthesis of raffinose, a major soluble carbohydrate in seeds, roots and tubers. This is Probable galactinol--sucrose galactosyltransferase 6 (RFS6) from Arabidopsis thaliana (Mouse-ear cress).